Reading from the N-terminus, the 361-residue chain is Chorismate synthase (361 aa).

R48 provides a ligand contact to NADP(+). Residues R125–S127, N238–A239, G278, K293–S297, and R319 contribute to the FMN site.

It belongs to the chorismate synthase family. In terms of assembly, homotetramer. The cofactor is FMNH2.

It catalyses the reaction 5-O-(1-carboxyvinyl)-3-phosphoshikimate = chorismate + phosphate. The protein operates within metabolic intermediate biosynthesis; chorismate biosynthesis; chorismate from D-erythrose 4-phosphate and phosphoenolpyruvate: step 7/7. In terms of biological role, catalyzes the anti-1,4-elimination of the C-3 phosphate and the C-6 proR hydrogen from 5-enolpyruvylshikimate-3-phosphate (EPSP) to yield chorismate, which is the branch point compound that serves as the starting substrate for the three terminal pathways of aromatic amino acid biosynthesis. This reaction introduces a second double bond into the aromatic ring system. The sequence is that of Chorismate synthase from Vibrio anguillarum (strain ATCC 68554 / 775) (Listonella anguillarum).